Here is a 516-residue protein sequence, read N- to C-terminus: Methionine--tRNA ligase (516 aa).

The short motif at 13 to 23 is the 'HIGH' region element; the sequence is FYPNGKPHIGH. The 'KMSKS' region motif lies at 299 to 303; that stretch reads KMSKS. ATP is bound at residue Lys-302.

It belongs to the class-I aminoacyl-tRNA synthetase family. MetG type 2B subfamily. As to quaternary structure, monomer.

Its subcellular location is the cytoplasm. The catalysed reaction is tRNA(Met) + L-methionine + ATP = L-methionyl-tRNA(Met) + AMP + diphosphate. Is required not only for elongation of protein synthesis but also for the initiation of all mRNA translation through initiator tRNA(fMet) aminoacylation. This chain is Methionine--tRNA ligase, found in Mesorhizobium japonicum (strain LMG 29417 / CECT 9101 / MAFF 303099) (Mesorhizobium loti (strain MAFF 303099)).